The primary structure comprises 428 residues: Glutamate-1-semialdehyde 2,1-aminomutase (428 aa).

Residue Lys-265 is modified to N6-(pyridoxal phosphate)lysine.

It belongs to the class-III pyridoxal-phosphate-dependent aminotransferase family. HemL subfamily. Homodimer. Pyridoxal 5'-phosphate serves as cofactor.

It localises to the cytoplasm. The enzyme catalyses (S)-4-amino-5-oxopentanoate = 5-aminolevulinate. Its pathway is porphyrin-containing compound metabolism; protoporphyrin-IX biosynthesis; 5-aminolevulinate from L-glutamyl-tRNA(Glu): step 2/2. This is Glutamate-1-semialdehyde 2,1-aminomutase from Legionella pneumophila (strain Paris).